The chain runs to 382 residues: Galactokinase (382 aa).

34–37 contacts substrate; the sequence is EHTD. ATP is bound at residue 124 to 130; sequence GAGLSSS. Residues serine 130 and glutamate 162 each contribute to the Mg(2+) site. Residue aspartate 174 is the Proton acceptor of the active site. Tyrosine 223 is a substrate binding site.

This sequence belongs to the GHMP kinase family. GalK subfamily.

The protein resides in the cytoplasm. It catalyses the reaction alpha-D-galactose + ATP = alpha-D-galactose 1-phosphate + ADP + H(+). The protein operates within carbohydrate metabolism; galactose metabolism. Functionally, catalyzes the transfer of the gamma-phosphate of ATP to D-galactose to form alpha-D-galactose-1-phosphate (Gal-1-P). The protein is Galactokinase of Aeromonas hydrophila subsp. hydrophila (strain ATCC 7966 / DSM 30187 / BCRC 13018 / CCUG 14551 / JCM 1027 / KCTC 2358 / NCIMB 9240 / NCTC 8049).